Here is a 154-residue protein sequence, read N- to C-terminus: Ubiquitin-conjugating enzyme E2 L3 (154 aa).

Residues Ala2 to Glu149 enclose the UBC core domain. Cys86 (glycyl thioester intermediate) is an active-site residue. Lys131 bears the N6-acetyllysine mark.

Belongs to the ubiquitin-conjugating enzyme family. In terms of assembly, interacts with PRKN; involved in ubiquitination and degradation of misfolded proteins. Interacts with UBE3A. Interacts with CCNB1IP1, CBL, ZAP70, RNF19A, RNF19B and RNF144B. Interacts with ARIH1. Interacts with ARIH2 (via RING-type 1). Interacts with NCOA1; they functionally interact to regulate progesterone receptor transcriptional activity. Interacts with NDFIP1 (via N-terminus); the interaction mediates recruitment of UBE2L3 to ITCH and causes MAP3K7 ubiquitination. Ubiquitinated. The alteration of UBE2L3 protein levels during the S-phase of the cell cycle is due to ubiquitin-dependent proteasomal degradation. Autoubiquitinated in vitro.

It localises to the nucleus. Its subcellular location is the cytoplasm. It carries out the reaction S-ubiquitinyl-[E1 ubiquitin-activating enzyme]-L-cysteine + [E2 ubiquitin-conjugating enzyme]-L-cysteine = [E1 ubiquitin-activating enzyme]-L-cysteine + S-ubiquitinyl-[E2 ubiquitin-conjugating enzyme]-L-cysteine.. It functions in the pathway protein modification; protein ubiquitination. In terms of biological role, ubiquitin-conjugating enzyme E2 that specifically acts with HECT-type and RBR family E3 ubiquitin-protein ligases. Does not function with most RING-containing E3 ubiquitin-protein ligases because it lacks intrinsic E3-independent reactivity with lysine: in contrast, it has activity with the RBR family E3 enzymes, such as PRKN, RNF31 and ARIH1, that function like RING-HECT hybrids. Accepts ubiquitin from the E1 complex and catalyzes its covalent attachment to other proteins. Mediates ubiquitination by the CUL9-RBX1 complex. In vitro catalyzes 'Lys-11'-linked polyubiquitination. Involved in the selective degradation of short-lived and abnormal proteins. Down-regulated during the S-phase it is involved in progression through the cell cycle. Regulates nuclear hormone receptors transcriptional activity. May play a role in myelopoiesis. This is Ubiquitin-conjugating enzyme E2 L3 (UBE2L3) from Pongo abelii (Sumatran orangutan).